A 346-amino-acid chain; its full sequence is Heterogeneous nuclear ribonucleoprotein A2 homolog 1 (346 aa).

RRM domains are found at residues 9 to 92 (RKLF…ESAK) and 100 to 179 (KKLF…LSKQ). Disordered stretches follow at residues 182–217 (QDVQNTRNNRGGNFGFGDSRGGGNFGSGPGGNFRGG) and 326–346 (NYGPGNASGGNGGGYGGRNRY). Over residues 193-217 (GNFGFGDSRGGGNFGSGPGGNFRGG) the composition is skewed to gly residues. The interval 297–340 (QQSSNYGPMKSGGNFGGNRSMGGGPYGGGNYGPGNASGGNGGGY) is nuclear targeting sequence.

Its subcellular location is the nucleus. Functionally, forms complexes (ribonucleosomes) with at least 20 other different hnRNP and heterogeneous nuclear RNA in the nucleus. The chain is Heterogeneous nuclear ribonucleoprotein A2 homolog 1 from Xenopus laevis (African clawed frog).